The chain runs to 295 residues: AP-1-like transcription factor YAP4 (295 aa).

S85, S89, and S196 each carry phosphoserine. Over residues 181–202 the composition is skewed to polar residues; it reads ASYFPSNSTPATRKNSATTNLP. Residues 181 to 205 form a disordered region; it reads ASYFPSNSTPATRKNSATTNLPSEE. Residues 237–295 form the bZIP domain; that stretch reads PLRNTKRAAQNRSAQKAFRQRREKYIKNLEEKSKLFDGLMKENSELKKMIESLKSKLKE. A basic motif region spans residues 239-260; sequence RNTKRAAQNRSAQKAFRQRREK. The leucine-zipper stretch occupies residues 262 to 271; it reads IKNLEEKSKL.

The protein belongs to the bZIP family. YAP subfamily. In terms of assembly, homodimer.

It is found in the cytoplasm. The protein localises to the nucleus. Functionally, transcription activator involved in the regulation of genes expressed in response to environmental changes and metabolic requirements. According to genome-wide promoter binding and gene expression studies it regulates, among others, genes involved in ribosome biogenesis, and protein synthesis. It may also be involved in pleiotropic drug resistance. When overexpressed it confers increased resistance to cisplatin, the DNA-alkylating agents methylmethanosulfonate, and mitomycin C, the antimalarial drugs quinidine, mefloquine, and chloroquine, and increases cellular tolerance to sodium and lithium. Preferentially binds 5'-TTACTAA-3'. In Saccharomyces cerevisiae (strain ATCC 204508 / S288c) (Baker's yeast), this protein is AP-1-like transcription factor YAP4 (CIN5).